A 220-amino-acid polypeptide reads, in one-letter code: NADH-quinone oxidoreductase subunit I (220 aa).

4Fe-4S ferredoxin-type domains lie at 71–102 and 112–141; these read LQRLLDSGSERCIGCGLCEKICTSNCIRIITH and DSYTINLGRCIYCGLCAEVCPELAIVMGNR. [4Fe-4S] cluster is bound by residues C82, C85, C88, C92, C121, C124, C127, and C131. The disordered stretch occupies residues 187–220; that stretch reads MQATPLDYVQEPSKEESKEESPTSPESHKGDENV. The span at 198 to 220 shows a compositional bias: basic and acidic residues; it reads PSKEESKEESPTSPESHKGDENV.

Belongs to the complex I 23 kDa subunit family. NDH-1 is composed of 14 different subunits. Subunits NuoA, H, J, K, L, M, N constitute the membrane sector of the complex. The cofactor is [4Fe-4S] cluster.

The protein localises to the cell inner membrane. The catalysed reaction is a quinone + NADH + 5 H(+)(in) = a quinol + NAD(+) + 4 H(+)(out). In terms of biological role, NDH-1 shuttles electrons from NADH, via FMN and iron-sulfur (Fe-S) centers, to quinones in the respiratory chain. The immediate electron acceptor for the enzyme in this species is believed to be ubiquinone. Couples the redox reaction to proton translocation (for every two electrons transferred, four hydrogen ions are translocated across the cytoplasmic membrane), and thus conserves the redox energy in a proton gradient. The protein is NADH-quinone oxidoreductase subunit I of Helicobacter pylori (strain J99 / ATCC 700824) (Campylobacter pylori J99).